The chain runs to 571 residues: Putative F-box protein At5g39460 (571 aa).

Residues 9-55 (ACLLLTLPEDVFAVISRFLSPSDICNLILCGKSLCALVDSEKTWLVQ) enclose the F-box domain.

The polypeptide is Putative F-box protein At5g39460 (Arabidopsis thaliana (Mouse-ear cress)).